The chain runs to 86 residues: Protein K3 homolog (86 aa).

Positions 15 to 86 constitute an S1 motif domain; that stretch reads NINDITQGII…LKGYIDVSIV (72 aa).

The protein belongs to the poxviridae K3 protein family. In terms of assembly, interacts with host PKR kinase.

Its function is as follows. Viral mimic of eIF-2-alpha that acts as a pseudosubstrate for EIF2AK2/PKR kinase. Inhibits therefore eIF-2-alpha phosphorylation by host EIF2AK2/PKR kinase and prevents protein synthesis shutoff. This is Protein K3 homolog from Sus scrofa (Pig).